The sequence spans 400 residues: Tryptophan synthase beta chain (400 aa).

N6-(pyridoxal phosphate)lysine is present on lysine 92.

This sequence belongs to the TrpB family. In terms of assembly, tetramer of two alpha and two beta chains. Pyridoxal 5'-phosphate is required as a cofactor.

It catalyses the reaction (1S,2R)-1-C-(indol-3-yl)glycerol 3-phosphate + L-serine = D-glyceraldehyde 3-phosphate + L-tryptophan + H2O. Its pathway is amino-acid biosynthesis; L-tryptophan biosynthesis; L-tryptophan from chorismate: step 5/5. The beta subunit is responsible for the synthesis of L-tryptophan from indole and L-serine. This Neisseria gonorrhoeae protein is Tryptophan synthase beta chain.